A 103-amino-acid chain; its full sequence is Histone H4 (103 aa).

Residues 1 to 14 are compositionally biased toward gly residues; sequence MSGRGKGGKGLGKG. The segment at 1–20 is disordered; it reads MSGRGKGGKGLGKGGAKRHR. Ser-2 is subject to N-acetylserine. 2 positions are modified to N6-acetyl-N6-methyllysine; alternate: Lys-6 and Lys-13. The residue at position 17 (Lys-17) is an N6-acetyllysine. Residues 17–21 mediate DNA binding; sequence KRHRK. Lys-21 bears the N6-methyllysine mark.

It belongs to the histone H4 family. The nucleosome is a histone octamer containing two molecules each of H2A, H2B, H3 and H4 assembled in one H3-H4 heterotetramer and two H2A-H2B heterodimers. The octamer wraps approximately 147 bp of DNA.

The protein resides in the nucleus. It is found in the chromosome. In terms of biological role, core component of nucleosome. Nucleosomes wrap and compact DNA into chromatin, limiting DNA accessibility to the cellular machineries which require DNA as a template. Histones thereby play a central role in transcription regulation, DNA repair, DNA replication and chromosomal stability. DNA accessibility is regulated via a complex set of post-translational modifications of histones, also called histone code, and nucleosome remodeling. The polypeptide is Histone H4 (Holothuria tubulosa (Tubular sea cucumber)).